We begin with the raw amino-acid sequence, 330 residues long: Aspartate--ammonia ligase (330 aa).

It belongs to the class-II aminoacyl-tRNA synthetase family. AsnA subfamily.

The protein localises to the cytoplasm. The enzyme catalyses L-aspartate + NH4(+) + ATP = L-asparagine + AMP + diphosphate + H(+). The protein operates within amino-acid biosynthesis; L-asparagine biosynthesis; L-asparagine from L-aspartate (ammonia route): step 1/1. The polypeptide is Aspartate--ammonia ligase (Streptococcus pyogenes serotype M2 (strain MGAS10270)).